A 110-amino-acid polypeptide reads, in one-letter code: Holo-[acyl-carrier-protein] synthase (110 aa).

Residues aspartate 8 and glutamate 54 each contribute to the Mg(2+) site.

Belongs to the P-Pant transferase superfamily. AcpS family. Mg(2+) serves as cofactor.

The protein localises to the cytoplasm. It catalyses the reaction apo-[ACP] + CoA = holo-[ACP] + adenosine 3',5'-bisphosphate + H(+). In terms of biological role, transfers the 4'-phosphopantetheine moiety from coenzyme A to a Ser of acyl-carrier-protein. The chain is Holo-[acyl-carrier-protein] synthase from Mycoplasma capricolum subsp. capricolum (strain California kid / ATCC 27343 / NCTC 10154).